The sequence spans 193 residues: Small ribosomal subunit protein eS1 (193 aa).

The protein belongs to the eukaryotic ribosomal protein eS1 family.

The polypeptide is Small ribosomal subunit protein eS1 (Methanobrevibacter smithii (strain ATCC 35061 / DSM 861 / OCM 144 / PS)).